Reading from the N-terminus, the 745-residue chain is MKESFYIEGMTCTACSSGIERSLGRKSFVKKIEVSLLNKSANIEFDENQTNLDEIFKLIEKLGYSPKKALTKEKKEFFSPNVKLALAVIFTLFVVYLSMGAMLSPSLLPESLLAIDNHSNFLNACLQLIGALIVMHLGRDFYIQGFKALWHRQPNMSSLIAIGTSAALISSLWQLYLVYTNHYTDQWSYGHYYFESVCVILMFVMVGKRIENVSKDKALDAMQALMKNAPKTALKMQNNQQIEVLVDSIVVGDILKVLPGSAIAVDGEIIEGEGELDESMLSGEALPVYKKVGDKVFSGTFNSHTSFLMKATQNNKNSTLSQIIEMIYNAQSSKAEISRLADKVSSVFVPSVIAISILAFVVWLIIAPKPDFWWNFGIALEVFVSVLVISCPCALGLATPMSILVANQKASSLGLFFKDAKSLEKARLVNTIVFDKTGTLTNGKPVVKSVHSKIELLELLSLALSIEKSSEHVIAKGIVEYAKEHNAPLKEMSGVKVKTGFGISAKTDYQGTKEIIKVGNSEFFNPINTLEIKENGILVFVGRAISEKEDELLGAFVLEDLPKKGVKEHIAQIKNLGINTFLLSGDNRENVQKCAFELGIDGYISNAKPQDKLNKIKELKEKGQIVMMVGDGLNDAPSLAMSDVAVVMAKGSDVSVQAADIVSFNNDIKSVYSAIKLSQATIKNIKENLFWAFCYNSVFIPLACGVLYKANLMLSPAIAGLAMSLSSVSVVLNSQRLRNFKIKDH.

The 67-residue stretch at 1–67 folds into the HMA domain; the sequence is MKESFYIEGM…LIEKLGYSPK (67 aa). Residues 1–83 lie on the Cytoplasmic side of the membrane; the sequence is MKESFYIEGM…KKEFFSPNVK (83 aa). Positions 12 and 15 each coordinate Cu cation. Residues 84–104 form a helical membrane-spanning segment; that stretch reads LALAVIFTLFVVYLSMGAMLS. Residues 105–124 lie on the Extracellular side of the membrane; the sequence is PSLLPESLLAIDNHSNFLNA. The helical transmembrane segment at 125–144 threads the bilayer; it reads CLQLIGALIVMHLGRDFYIQ. The Cytoplasmic segment spans residues 145–151; that stretch reads GFKALWH. Residues 152 to 172 form a helical membrane-spanning segment; that stretch reads RQPNMSSLIAIGTSAALISSL. Residues 173 to 194 are Extracellular-facing; it reads WQLYLVYTNHYTDQWSYGHYYF. A helical membrane pass occupies residues 195-215; that stretch reads ESVCVILMFVMVGKRIENVSK. At 216–343 the chain is on the cytoplasmic side; the sequence is DKALDAMQAL…KAEISRLADK (128 aa). A helical transmembrane segment spans residues 344–366; that stretch reads VSSVFVPSVIAISILAFVVWLII. Residues 367-379 are Extracellular-facing; that stretch reads APKPDFWWNFGIA. A helical transmembrane segment spans residues 380 to 397; that stretch reads LEVFVSVLVISCPCALGL. At 398-685 the chain is on the cytoplasmic side; that stretch reads ATPMSILVAN…KLSQATIKNI (288 aa). Asp435 acts as the 4-aspartylphosphate intermediate in catalysis. Mg(2+)-binding residues include Asp631 and Asp635. The helical transmembrane segment at 686–705 threads the bilayer; sequence KENLFWAFCYNSVFIPLACG. Residues 706-716 are Extracellular-facing; it reads VLYKANLMLSP. The chain crosses the membrane as a helical span at residues 717–735; sequence AIAGLAMSLSSVSVVLNSQ. Residues 736 to 745 lie on the Cytoplasmic side of the membrane; that stretch reads RLRNFKIKDH.

This sequence belongs to the cation transport ATPase (P-type) (TC 3.A.3) family. Type IB subfamily.

It is found in the cell membrane. It catalyses the reaction Cu(2+)(in) + ATP + H2O = Cu(2+)(out) + ADP + phosphate + H(+). Probably involved in copper export. The sequence is that of Copper-transporting ATPase (copA) from Helicobacter pylori (strain ATCC 700392 / 26695) (Campylobacter pylori).